Reading from the N-terminus, the 291-residue chain is Quinol oxidase subunit 2 (291 aa).

Positions 1-28 (MQLKKAFWKLASLLPLSLLLFLGGCDKK) are cleaved as a signal peptide. A run of 2 helical transmembrane segments spans residues 49–69 (SFLL…VILI) and 91–111 (LEII…IPTV).

It belongs to the cytochrome c oxidase subunit 2 family.

It is found in the cell membrane. It catalyses the reaction 2 a quinol + O2 = 2 a quinone + 2 H2O. Its function is as follows. Catalyzes quinol oxidation with the concomitant reduction of oxygen to water. Subunit II transfers the electrons from a quinol to the binuclear center of the catalytic subunit I. The chain is Quinol oxidase subunit 2 from Bacillus anthracis.